Consider the following 365-residue polypeptide: DNA replication and repair protein RecF (365 aa).

Position 30 to 37 (30 to 37 (GQNGSGKT)) interacts with ATP.

This sequence belongs to the RecF family.

The protein localises to the cytoplasm. Its function is as follows. The RecF protein is involved in DNA metabolism; it is required for DNA replication and normal SOS inducibility. RecF binds preferentially to single-stranded, linear DNA. It also seems to bind ATP. The protein is DNA replication and repair protein RecF of Shewanella woodyi (strain ATCC 51908 / MS32).